The following is a 409-amino-acid chain: MAFGKSLFHAIGRVSLVRQIAAGLALGIVIGSVSPQLGLAAGLFGSLFVGALKAVAPVLVFILVAATIAQHQKGNKAHIRPIIVLYLIGTFSAALTAVIAGMVFPTHIVLAGAGDVSAAPPSGIVEVLKSLLMNLVANPINAIANANYIGILAWALVLGAALRNHGSDVTRQVVADLAEAVSTVVKWIIRFAPLGIFGLVSSTIAETGFGALAGYAKLLAVLLGCMAFIALVVNPAIVWWKIRRNPYPLVFTCLRESGVYAFFTRSSAANIPVNMALAKKLGLHEDTYSISIPLGATVNMGGAAITITVLAMAAAYTQGIQVDFATALLLSLVATVSACGASGVAGGSLLLIPLACSLFGISNDVAMQVVAVGFIIGVIQDSAETALNSSTDVLFTAAADLGRQRNRAE.

The next 9 membrane-spanning stretches (helical) occupy residues 24–44 (LALG…AGLF), 48–68 (FVGA…AATI), 82–102 (IIVL…IAGM), 142–162 (AIAN…GAAL), 194–214 (LGIF…ALAG), 218–238 (LLAV…PAIV), 292–312 (IPLG…VLAM), 319–339 (GIQV…VSAC), and 365–385 (VAMQ…SAET).

This sequence belongs to the dicarboxylate/amino acid:cation symporter (DAACS) (TC 2.A.23) family.

Its subcellular location is the cell inner membrane. The enzyme catalyses L-serine(in) + Na(+)(in) = L-serine(out) + Na(+)(out). It catalyses the reaction L-threonine(in) + Na(+)(in) = L-threonine(out) + Na(+)(out). In terms of biological role, involved in the import of serine and threonine into the cell, with the concomitant import of sodium (symport system). The polypeptide is Serine/threonine transporter SstT (Neisseria meningitidis serogroup C / serotype 2a (strain ATCC 700532 / DSM 15464 / FAM18)).